The primary structure comprises 407 residues: Accessory Sec system protein translocase subunit SecY2 (407 aa).

10 consecutive transmembrane segments (helical) span residues 22–42 (IAFT…TIVD), 68–88 (LNVF…ISLI), 108–128 (EKFL…NQFV), 136–156 (FTEL…MWLA), 169–189 (PIVL…IVSI), 191–211 (ILML…LLLT), 245–265 (ISIM…NLIF), 280–300 (FGHY…GYLL), 343–363 (WFGT…SLLV), and 366–386 (LSEY…AMNI).

The protein belongs to the SecY/SEC61-alpha family. SecY2 subfamily. Component of the accessory SecA2/SecY2 protein translocase complex required to export cell wall proteins. May form heterotrimers with SecE and SecG subunits.

It localises to the cell membrane. In terms of biological role, part of the accessory SecA2/SecY2 system specifically required for export of possible cell wall proteins. The central subunit of a protein translocation channel. The polypeptide is Accessory Sec system protein translocase subunit SecY2 (Staphylococcus pseudintermedius (strain ED99)).